The chain runs to 376 residues: tRNA-specific 2-thiouridylase MnmA (376 aa).

Residues 17-24 (GMSGGVDS) and M43 each bind ATP. Positions 103-105 (NPD) are interaction with target base in tRNA. C108 functions as the Nucleophile in the catalytic mechanism. The cysteines at positions 108 and 204 are disulfide-linked. G132 contacts ATP. The segment at 154–156 (KDQ) is interaction with tRNA. The active-site Cysteine persulfide intermediate is the C204. The tract at residues 316–317 (RY) is interaction with tRNA.

Belongs to the MnmA/TRMU family.

Its subcellular location is the cytoplasm. The enzyme catalyses S-sulfanyl-L-cysteinyl-[protein] + uridine(34) in tRNA + AH2 + ATP = 2-thiouridine(34) in tRNA + L-cysteinyl-[protein] + A + AMP + diphosphate + H(+). Its function is as follows. Catalyzes the 2-thiolation of uridine at the wobble position (U34) of tRNA, leading to the formation of s(2)U34. The sequence is that of tRNA-specific 2-thiouridylase MnmA from Pseudomonas syringae pv. syringae (strain B728a).